Consider the following 52-residue polypeptide: IYVRPTKDELLYCGEFRELGQPDKKCRCDGKPCTVGRCKFARGDADDKCTSA.

Positions Arg-42–Asp-44 match the Cell attachment site motif.

The protein belongs to the ornatin family.

The protein resides in the secreted. In terms of biological role, potent inhibitor of fibrinogen interaction with platelet receptors expressed on glycoprotein IIb-IIIa complex. May prevent blood from clotting during either feeding and/or storage of ingested blood. The protein is Ornatin-C of Placobdella ornata (Turtle leech).